A 124-amino-acid chain; its full sequence is Secreted RxLR effector protein 49 (124 aa).

The N-terminal stretch at 1–22 is a signal peptide; that stretch reads MIRRSPLVAVILFVAITHVVLA. The RxLR signature appears at 57-60; the sequence is RSLR.

It belongs to the RxLR effector family.

The protein resides in the secreted. It is found in the host cytoplasm. The protein localises to the host nucleus. Functionally, effector that acts as a broad suppressor of cell death to interrupt plant immunity. Inhibits cell death induced by cell death-inducing proteins, including the PAMP elicitor INF1 from P.infestans. The polypeptide is Secreted RxLR effector protein 49 (Plasmopara viticola (Downy mildew of grapevine)).